Consider the following 146-residue polypeptide: Large ribosomal subunit protein uL23B (146 aa).

The tract at residues 1–22 is disordered; it reads MAPSSNKVGKAIQAKKAVVKGS.

This sequence belongs to the universal ribosomal protein uL23 family.

Its function is as follows. This protein binds to a specific region on the 26S rRNA. The protein is Large ribosomal subunit protein uL23B (rpl-23A.2) of Caenorhabditis elegans.